The sequence spans 459 residues: Vacuolar cation/proton exchanger 3 (459 aa).

Topologically, residues 1-67 are cytoplasmic; that stretch reads MGSIVEPWAA…TLKNILSNLQ (67 aa). A helical membrane pass occupies residues 68 to 88; the sequence is EVILGTKLTLLFLAIPLAILA. Residues 89-95 lie on the Extracellular side of the membrane; the sequence is NSYNYGR. A helical transmembrane segment spans residues 96-116; the sequence is PLIFGLSLIGLTPLAERVSFL. At 117–129 the chain is on the cytoplasmic side; sequence TEQLAFYTGPTVG. A helical transmembrane segment spans residues 130 to 150; the sequence is GLLNATCGNATELIIAILALA. Residues 137–172 form a cation selection region; sequence GNATELIIAILALANNKVAVVKYSLLGSILSNLLLV. Topologically, residues 151–161 are extracellular; the sequence is NNKVAVVKYSL. The helical transmembrane segment at 162–182 threads the bilayer; sequence LGSILSNLLLVLGTSLFFGGI. Over 183 to 195 the chain is Cytoplasmic; it reads ANIRREQRFDRKQ. The helical transmembrane segment at 196 to 216 threads the bilayer; the sequence is ADVNFFLLLMGLLCHLLPLLL. Over 217-238 the chain is Extracellular; that stretch reads KYAATGEVSTSMINKMSLTLSR. A helical transmembrane segment spans residues 239 to 259; it reads TSSIVMLIAYIAYLIFQLWTH. Residues 260–283 lie on the Cytoplasmic side of the membrane; it reads RQLFEAQQDDDDAYDDEVSVEETP. A helical membrane pass occupies residues 284–304; that stretch reads VIGFWSGFAWLVGMTIVIALL. Residues 305-327 lie on the Extracellular side of the membrane; the sequence is SEYVVDTIEDASDSWGLSVSFIS. A helical transmembrane segment spans residues 328–348; the sequence is IILLPIVGNAAEHAGAIIFAF. A cation selection region spans residues 335–370; the sequence is GNAAEHAGAIIFAFKNKLDISLGVALGSATQISLFV. Over 349-362 the chain is Cytoplasmic; the sequence is KNKLDISLGVALGS. A helical membrane pass occupies residues 363-383; the sequence is ATQISLFVVPLSVIVAWILGI. Topologically, residues 384–386 are extracellular; that stretch reads KMD. The helical transmembrane segment at 387 to 407 threads the bilayer; the sequence is LNFNILETSSLALAIIITAFT. At 408–417 the chain is on the cytoplasmic side; it reads LQDGTSHYMK. Residues 418–438 form a helical membrane-spanning segment; the sequence is GLVLLLCYVIIAACFFVDQIP. Residues 439–459 are Extracellular-facing; it reads QPNDLDVGLQPMNNLGEVFSA.

The protein belongs to the Ca(2+):cation antiporter (CaCA) (TC 2.A.19) family. Cation/proton exchanger (CAX) subfamily. As to expression, expressed in roots, stems and flowers.

It localises to the vacuole membrane. With respect to regulation, inhibited by excess of Ca(2+). Functionally, vacuolar cation/proton exchanger (CAX). Translocates Ca(2+) and other metal ions into vacuoles using the proton gradient formed by H(+)-ATPase and H(+)-pyrophosphatase. Involved in ion homeostasis in association with CAX1. The chain is Vacuolar cation/proton exchanger 3 (CAX3) from Arabidopsis thaliana (Mouse-ear cress).